The sequence spans 136 residues: Large ribosomal subunit protein uL16 (136 aa).

The protein belongs to the universal ribosomal protein uL16 family. In terms of assembly, part of the 50S ribosomal subunit.

Binds 23S rRNA and is also seen to make contacts with the A and possibly P site tRNAs. This Orientia tsutsugamushi (strain Ikeda) (Rickettsia tsutsugamushi) protein is Large ribosomal subunit protein uL16.